We begin with the raw amino-acid sequence, 124 residues long: Small ribosomal subunit protein uS11 (124 aa).

Positions 102-124 are disordered; that stretch reads RIGRIEDATPIPHDGTTPKRKNR.

Belongs to the universal ribosomal protein uS11 family. As to quaternary structure, part of the 30S ribosomal subunit.

In terms of biological role, located on the platform of the 30S subunit. The protein is Small ribosomal subunit protein uS11 of Methanococcus maripaludis (strain C5 / ATCC BAA-1333).